The sequence spans 192 residues: Thymidine kinase (192 aa).

ATP-binding positions include 9–16 (SAMNAGKS) and 87–90 (DECQ). The active-site Proton acceptor is Glu-88. Residues Cys-145, Cys-147, Cys-182, and His-185 each contribute to the Zn(2+) site.

It belongs to the thymidine kinase family. As to quaternary structure, homotetramer.

It is found in the cytoplasm. The enzyme catalyses thymidine + ATP = dTMP + ADP + H(+). This is Thymidine kinase from Vibrio parahaemolyticus serotype O3:K6 (strain RIMD 2210633).